Consider the following 556-residue polypeptide: 2-isopropylmalate synthase (556 aa).

Positions 33 to 307 constitute a Pyruvate carboxyltransferase domain; the sequence is PIWCSSDLRD…DPELDFSDID (275 aa). 4 residues coordinate Mg(2+): Asp42, His246, His248, and Asn282. A regulatory domain region spans residues 439–556; that stretch reads ANTPYALISH…SLSQTQAKAA (118 aa).

This sequence belongs to the alpha-IPM synthase/homocitrate synthase family. LeuA type 2 subfamily. Homodimer. The cofactor is Mg(2+).

Its subcellular location is the cytoplasm. The enzyme catalyses 3-methyl-2-oxobutanoate + acetyl-CoA + H2O = (2S)-2-isopropylmalate + CoA + H(+). Its pathway is amino-acid biosynthesis; L-leucine biosynthesis; L-leucine from 3-methyl-2-oxobutanoate: step 1/4. Its function is as follows. Catalyzes the condensation of the acetyl group of acetyl-CoA with 3-methyl-2-oxobutanoate (2-ketoisovalerate) to form 3-carboxy-3-hydroxy-4-methylpentanoate (2-isopropylmalate). The sequence is that of 2-isopropylmalate synthase from Pseudomonas savastanoi pv. phaseolicola (strain 1448A / Race 6) (Pseudomonas syringae pv. phaseolicola (strain 1448A / Race 6)).